We begin with the raw amino-acid sequence, 252 residues long: Pimeloyl-[acyl-carrier protein] methyl ester esterase (252 aa).

Residues 15–239 (LVMLHGWAMH…FPHCGHAPFL (225 aa)) enclose the AB hydrolase-1 domain. Substrate-binding positions include Trp21, 81–82 (SL), and 143–147 (FLTLQ). Ser81 acts as the Nucleophile in catalysis. Catalysis depends on residues Asp207 and His235. His235 contacts substrate.

This sequence belongs to the AB hydrolase superfamily. Carboxylesterase BioH family. As to quaternary structure, monomer.

It localises to the cytoplasm. The catalysed reaction is 6-carboxyhexanoyl-[ACP] methyl ester + H2O = 6-carboxyhexanoyl-[ACP] + methanol + H(+). The protein operates within cofactor biosynthesis; biotin biosynthesis. Functionally, the physiological role of BioH is to remove the methyl group introduced by BioC when the pimeloyl moiety is complete. It allows to synthesize pimeloyl-ACP via the fatty acid synthetic pathway through the hydrolysis of the ester bonds of pimeloyl-ACP esters. In Nitrosomonas europaea (strain ATCC 19718 / CIP 103999 / KCTC 2705 / NBRC 14298), this protein is Pimeloyl-[acyl-carrier protein] methyl ester esterase.